The primary structure comprises 348 residues: tRNA pseudouridine synthase B (348 aa).

Asp52 acts as the Nucleophile in catalysis.

It belongs to the pseudouridine synthase TruB family. Type 1 subfamily.

The catalysed reaction is uridine(55) in tRNA = pseudouridine(55) in tRNA. Responsible for synthesis of pseudouridine from uracil-55 in the psi GC loop of transfer RNAs. The polypeptide is tRNA pseudouridine synthase B (Rhodopirellula baltica (strain DSM 10527 / NCIMB 13988 / SH1)).